Consider the following 383-residue polypeptide: uncharacterized protein (383 aa).

The protein belongs to the peptidase M20 family.

This is an uncharacterized protein from Staphylococcus aureus (strain bovine RF122 / ET3-1).